Reading from the N-terminus, the 392-residue chain is Na(+)/H(+) antiporter NhaA (392 aa).

11 helical membrane-spanning segments follow: residues 16-36, 58-78, 93-113, 124-144, 153-173, 176-196, 199-219, 257-277, 295-315, 328-348, and 362-382; these read ILLIIVTVLALILQNSFLSAA, LLLWVNDGLMAIFFFLIGLEV, ITLPGIAAVGGMIVPALIFIL, GWAIPTATDIAFALGILSLLG, IFLMALSIIDDLGAIVIIALF, TDLSTLSITVAAISLAILFIM, MDVAIKSAYIVIGIILWVSVL, DLHYWVAFLILPLFAFVNAGV, VMLGLFVGKQAGVFGFSWLAI, WMMLYGVSVLTGIGFTMSLFV, and ADKLAILLGSFLSAATGYLIL.

It belongs to the NhaA Na(+)/H(+) (TC 2.A.33) antiporter family.

The protein localises to the cell inner membrane. The enzyme catalyses Na(+)(in) + 2 H(+)(out) = Na(+)(out) + 2 H(+)(in). In terms of biological role, na(+)/H(+) antiporter that extrudes sodium in exchange for external protons. This is Na(+)/H(+) antiporter NhaA from Sulfurovum sp. (strain NBC37-1).